The chain runs to 273 residues: Bidirectional sugar transporter SWEET1a (273 aa).

Residues 1–6 (MEHIAR) lie on the Extracellular side of the membrane. Residues 7–27 (FFFGVSGNVIALFLFLSPVVT) form a helical membrane-spanning segment. The 89-residue stretch at 7-95 (FFFGVSGNVI…VIFLIFAERK (89 aa)) folds into the MtN3/slv 1 domain. The Cytoplasmic segment spans residues 28–42 (FWRIIKKRSTEDFSG). Residues 43 to 63 (VPYNMTLLNCLLSAWYGLPFV) traverse the membrane as a helical segment. Over 64–71 (SPNNILVT) the chain is Extracellular. Residues 72 to 92 (TINGTGSVIEAIYVVIFLIFA) form a helical membrane-spanning segment. At 93–101 (ERKARLKMM) the chain is on the cytoplasmic side. Residues 102-122 (GLLGLVTSIFTMVVLVSLLAL) form a helical membrane-spanning segment. Over 123–128 (HGQGRK) the chain is Extracellular. A helical transmembrane segment spans residues 129-149 (LFCGLAATIFSICMYASPLSI). The MtN3/slv 2 domain maps to 131–214 (CGLAATIFSI…ILYAIYRNHK (84 aa)). Topologically, residues 150-163 (MRLVIKTKSVEFMP) are cytoplasmic. A helical transmembrane segment spans residues 164-184 (FLLSLSVFLCGTSWFIYGLLG). Residues 185–188 (RDPF) are Extracellular-facing. A helical membrane pass occupies residues 189-209 (IAIPNGCGSFLGLMQLILYAI). Residues 210-273 (YRNHKGATPA…SADDKVASQV (64 aa)) are Cytoplasmic-facing.

The protein belongs to the SWEET sugar transporter family. As to quaternary structure, forms homooligomers and/or heterooligomers.

It localises to the cell membrane. Its function is as follows. Mediates both low-affinity uptake and efflux of sugar across the plasma membrane. This is Bidirectional sugar transporter SWEET1a (SWEET1A) from Oryza sativa subsp. japonica (Rice).